The sequence spans 460 residues: uncharacterized protein (460 aa).

The tat-type signal signal peptide spans 1–33 (MKESNSRREFLSQSGKMVTAAALFGTSVPLAHA).

The protein belongs to the metallo-dependent hydrolases superfamily. Post-translationally, exported by the Tat system. The position of the signal peptide cleavage has not been experimentally proven. Can also be exported by the Sec system.

This is an uncharacterized protein from Escherichia coli (strain K12).